Consider the following 263-residue polypeptide: Acyl-[acyl-carrier-protein]--UDP-N-acetylglucosamine O-acyltransferase (263 aa).

This sequence belongs to the transferase hexapeptide repeat family. LpxA subfamily. As to quaternary structure, homotrimer.

The protein localises to the cytoplasm. The enzyme catalyses a (3R)-hydroxyacyl-[ACP] + UDP-N-acetyl-alpha-D-glucosamine = a UDP-3-O-[(3R)-3-hydroxyacyl]-N-acetyl-alpha-D-glucosamine + holo-[ACP]. Its pathway is glycolipid biosynthesis; lipid IV(A) biosynthesis; lipid IV(A) from (3R)-3-hydroxytetradecanoyl-[acyl-carrier-protein] and UDP-N-acetyl-alpha-D-glucosamine: step 1/6. Involved in the biosynthesis of lipid A, a phosphorylated glycolipid that anchors the lipopolysaccharide to the outer membrane of the cell. The chain is Acyl-[acyl-carrier-protein]--UDP-N-acetylglucosamine O-acyltransferase from Xylella fastidiosa (strain Temecula1 / ATCC 700964).